The sequence spans 908 residues: Replication protein 1a (908 aa).

Residues 47 to 341 (GLSEASVQEL…ITACKGLYDR (295 aa)) are methyltransferase. Residues 66 to 304 (EEESVPLPPH…HNLADVLSIA (239 aa)) enclose the Alphavirus-like MT domain. A (+)RNA virus helicase ATP-binding domain is found at 599 to 755 (PSMQIMNQIR…KLEVDAREVR (157 aa)). The ATP-dependent helicase stretch occupies residues 629–887 (IDGVAGCGKT…SRHTQSFTYI (259 aa)). The (+)RNA virus helicase C-terminal domain occupies 756–908 (ETTYRCPADV…MLKFVICQIP (153 aa)).

The protein belongs to the bromoviridae replication protein 1a family. In terms of assembly, interacts with RNA-directed RNA polymerase 2a.

The protein localises to the host endoplasmic reticulum membrane. Involved in the virus replication. Contains a helicase domain and a methyltransferase domain. The methyltransferase domain is probably involved in viral RNA capping. Involved in the formation of ER membrane spherular invaginations in which RNA replication complexes form. This chain is Replication protein 1a, found in Olea (OLV-2).